The sequence spans 107 residues: Integration host factor subunit beta (107 aa).

The tract at residues Arg56–Leu107 is disordered. Residues Lys65 to Leu107 show a composition bias toward basic and acidic residues.

Belongs to the bacterial histone-like protein family. Heterodimer of an alpha and a beta chain.

This protein is one of the two subunits of integration host factor, a specific DNA-binding protein that functions in genetic recombination as well as in transcriptional and translational control. The polypeptide is Integration host factor subunit beta (Paraburkholderia phymatum (strain DSM 17167 / CIP 108236 / LMG 21445 / STM815) (Burkholderia phymatum)).